The primary structure comprises 91 residues: UPF0250 protein PputGB1_4855 (91 aa).

It belongs to the UPF0250 family.

This Pseudomonas putida (strain GB-1) protein is UPF0250 protein PputGB1_4855.